The sequence spans 222 residues: 2-C-methyl-D-erythritol 2,4-cyclodiphosphate synthase, chloroplastic (222 aa).

A chloroplast-targeting transit peptide spans 1–43; the sequence is MATASSLFLASPVATAPTARARSTPSASPARPSLRLRRPSTLA. A divalent metal cation-binding residues include Asp73 and His75. Substrate-binding positions include 73–75, 99–100, 103–111, 121–123, 126–130, Asp130, 165–171, and 196–200; these read DLH, HS, DVLLHCVVD, DIG, FPDSD, LQKPKIS, and AKTHE. His107 contributes to the a divalent metal cation binding site.

This sequence belongs to the IspF family. In terms of assembly, homotrimer. A divalent metal cation serves as cofactor. In terms of tissue distribution, expressed in roots, leaves, stems, leaf sheaths and young panicles.

The protein resides in the plastid. It is found in the chloroplast. It catalyses the reaction 4-CDP-2-C-methyl-D-erythritol 2-phosphate = 2-C-methyl-D-erythritol 2,4-cyclic diphosphate + CMP. It functions in the pathway isoprenoid biosynthesis; isopentenyl diphosphate biosynthesis via DXP pathway; isopentenyl diphosphate from 1-deoxy-D-xylulose 5-phosphate: step 4/6. Functionally, enzyme of the plastid non-mevalonate pathway for isoprenoid biosynthesis that converts 4-diphosphocytidyl-2C-methyl-D-erythritol 2-phosphate into 2C-methyl-D-erythritol 2,4-cyclodiphosphate and CMP. Is essential for chloroplast development. The chain is 2-C-methyl-D-erythritol 2,4-cyclodiphosphate synthase, chloroplastic from Oryza sativa subsp. japonica (Rice).